Here is a 112-residue protein sequence, read N- to C-terminus: Integration host factor subunit alpha (112 aa).

The protein belongs to the bacterial histone-like protein family. As to quaternary structure, heterodimer of an alpha and a beta chain.

Functionally, this protein is one of the two subunits of integration host factor, a specific DNA-binding protein that functions in genetic recombination as well as in transcriptional and translational control. This is Integration host factor subunit alpha from Agrobacterium fabrum (strain C58 / ATCC 33970) (Agrobacterium tumefaciens (strain C58)).